Reading from the N-terminus, the 442-residue chain is Tryptophan synthase beta chain 2 (442 aa).

At lysine 110 the chain carries N6-(pyridoxal phosphate)lysine.

It belongs to the TrpB family. As to quaternary structure, tetramer of two alpha and two beta chains. The cofactor is pyridoxal 5'-phosphate.

It catalyses the reaction (1S,2R)-1-C-(indol-3-yl)glycerol 3-phosphate + L-serine = D-glyceraldehyde 3-phosphate + L-tryptophan + H2O. The protein operates within amino-acid biosynthesis; L-tryptophan biosynthesis; L-tryptophan from chorismate: step 5/5. Its function is as follows. The beta subunit is responsible for the synthesis of L-tryptophan from indole and L-serine. The chain is Tryptophan synthase beta chain 2 from Thermococcus kodakarensis (strain ATCC BAA-918 / JCM 12380 / KOD1) (Pyrococcus kodakaraensis (strain KOD1)).